A 151-amino-acid polypeptide reads, in one-letter code: 3-hydroxyacyl-[acyl-carrier-protein] dehydratase FabZ (151 aa).

Histidine 54 is an active-site residue.

It belongs to the thioester dehydratase family. FabZ subfamily.

Its subcellular location is the cytoplasm. The catalysed reaction is a (3R)-hydroxyacyl-[ACP] = a (2E)-enoyl-[ACP] + H2O. Functionally, involved in unsaturated fatty acids biosynthesis. Catalyzes the dehydration of short chain beta-hydroxyacyl-ACPs and long chain saturated and unsaturated beta-hydroxyacyl-ACPs. In Blochmanniella floridana, this protein is 3-hydroxyacyl-[acyl-carrier-protein] dehydratase FabZ.